The following is a 445-amino-acid chain: Phosphoglucosamine mutase (445 aa).

Ser-102 serves as the catalytic Phosphoserine intermediate. Mg(2+) is bound by residues Ser-102, Asp-241, Asp-243, and Asp-245. The residue at position 102 (Ser-102) is a Phosphoserine.

It belongs to the phosphohexose mutase family. Requires Mg(2+) as cofactor. Activated by phosphorylation.

It carries out the reaction alpha-D-glucosamine 1-phosphate = D-glucosamine 6-phosphate. Catalyzes the conversion of glucosamine-6-phosphate to glucosamine-1-phosphate. This is Phosphoglucosamine mutase from Escherichia coli O139:H28 (strain E24377A / ETEC).